The chain runs to 86 residues: MSILDYFRSSKKPNTASLAKERLQIIVAHQRGERGAPDYFPKMKQEIIEVIRKYVQISDDQVSVQLDQNDDNLSVLELNVTLPDSK.

The protein belongs to the MinE family.

Its function is as follows. Prevents the cell division inhibition by proteins MinC and MinD at internal division sites while permitting inhibition at polar sites. This ensures cell division at the proper site by restricting the formation of a division septum at the midpoint of the long axis of the cell. The chain is Cell division topological specificity factor from Shewanella frigidimarina (strain NCIMB 400).